The primary structure comprises 148 residues: RxLR effector protein SFI7 (148 aa).

A signal peptide spans 1–22 (MRAYFVLLVAATAILTYGGATA). N32 is a glycosylation site (N-linked (GlcNAc...) asparagine). Residues 44–58 (RSLRVAPSGGNGEER) carry the RxLR-dEER motif.

Belongs to the RxLR effector family.

It localises to the secreted. The protein resides in the host cytoplasm. Its subcellular location is the host cell membrane. Functionally, effector that suppresses flg22-induced post-translational MAP kinase activation in tomato but not in Arabidopsis. The perception of highly conserved pathogen- or microbe-associated molecular patterns (PAMPs/MAMPs), such as flg22, triggers converging signaling pathways recruiting MAP kinase cascades and inducing transcriptional re-programming, yielding a generic antimicrobial response. Also partially attenuates INF1-triggered cell death. This Phytophthora infestans (strain T30-4) (Potato late blight agent) protein is RxLR effector protein SFI7.